The chain runs to 99 residues: Secreted RxLR effector protein 94 (99 aa).

The RxLR-dEER signature appears at 35–55 (RQLRQSANPSKAWHQWKSETR).

This sequence belongs to the RxLR effector family.

It is found in the secreted. The protein localises to the host nucleus. The protein resides in the host cytoplasm. Secreted effector that completely suppresses the host cell death induced by cell death-inducing proteins. The protein is Secreted RxLR effector protein 94 of Plasmopara viticola (Downy mildew of grapevine).